The chain runs to 225 residues: Germin-like protein 3-1 (225 aa).

Positions 1–22 are cleaved as a signal peptide; it reads MRAAVAHRILLSLALFAVLCRC. A disulfide bond links C31 and C51. One can recognise a Cupin type-1 domain in the interval 65–216; the sequence is SALSRATNPA…AFKITGQDVQ (152 aa). An N-linked (GlcNAc...) asparagine glycan is attached at N81. 4 residues coordinate Mn(2+): H115, H117, E122, and H161.

The protein belongs to the germin family. In terms of assembly, oligomer (believed to be a pentamer but probably hexamer).

The protein resides in the secreted. The protein localises to the extracellular space. It is found in the apoplast. Its function is as follows. May play a role in plant defense. Probably has no oxalate oxidase activity even if the active site is conserved. The protein is Germin-like protein 3-1 of Oryza sativa subsp. japonica (Rice).